A 330-amino-acid chain; its full sequence is 4-hydroxythreonine-4-phosphate dehydrogenase (330 aa).

Substrate is bound by residues His-134 and Thr-135. A divalent metal cation-binding residues include His-164, His-209, and His-264. Lys-272, Asn-281, and Arg-290 together coordinate substrate.

This sequence belongs to the PdxA family. As to quaternary structure, homodimer. Zn(2+) is required as a cofactor. The cofactor is Mg(2+). It depends on Co(2+) as a cofactor.

It is found in the cytoplasm. It carries out the reaction 4-(phosphooxy)-L-threonine + NAD(+) = 3-amino-2-oxopropyl phosphate + CO2 + NADH. Its pathway is cofactor biosynthesis; pyridoxine 5'-phosphate biosynthesis; pyridoxine 5'-phosphate from D-erythrose 4-phosphate: step 4/5. Its function is as follows. Catalyzes the NAD(P)-dependent oxidation of 4-(phosphooxy)-L-threonine (HTP) into 2-amino-3-oxo-4-(phosphooxy)butyric acid which spontaneously decarboxylates to form 3-amino-2-oxopropyl phosphate (AHAP). The sequence is that of 4-hydroxythreonine-4-phosphate dehydrogenase from Pseudoalteromonas translucida (strain TAC 125).